The sequence spans 258 residues: Aspartate/glutamate leucyltransferase (258 aa).

Belongs to the R-transferase family. Bpt subfamily.

The protein resides in the cytoplasm. It catalyses the reaction N-terminal L-glutamyl-[protein] + L-leucyl-tRNA(Leu) = N-terminal L-leucyl-L-glutamyl-[protein] + tRNA(Leu) + H(+). The catalysed reaction is N-terminal L-aspartyl-[protein] + L-leucyl-tRNA(Leu) = N-terminal L-leucyl-L-aspartyl-[protein] + tRNA(Leu) + H(+). Functions in the N-end rule pathway of protein degradation where it conjugates Leu from its aminoacyl-tRNA to the N-termini of proteins containing an N-terminal aspartate or glutamate. The polypeptide is Aspartate/glutamate leucyltransferase (Rhodopseudomonas palustris (strain ATCC BAA-98 / CGA009)).